Consider the following 377-residue polypeptide: Peroxisomal membrane protein PEX14 (377 aa).

Over residues 1-20 the composition is skewed to low complexity; that stretch reads MASSEQAEQPSQPSSSPGSE. The segment at 1–23 is disordered; that stretch reads MASSEQAEQPSQPSSSPGSENVV. Ala-2 bears the N-acetylalanine mark. The Peroxisomal portion of the chain corresponds to 2–108; that stretch reads ASSEQAEQPS…CSPGSSRWRD (107 aa). Lys-34 carries the post-translational modification N6-acetyllysine. The chain crosses the membrane as a helical span at residues 109–126; sequence YGALAIIMAGIAFGFHQL. Residues 127–377 are Cytoplasmic-facing; it reads YKKYLLPLIL…EGASNESERH (251 aa). A disordered region spans residues 230–377; sequence PPSPSAPKIP…EGASNESERH (148 aa). A Phosphoserine modification is found at Ser-232. Composition is skewed to low complexity over residues 244–259 and 265–275; these read PVKS…VNHH and SPVSNESTSSS. Phosphoserine occurs at positions 282 and 335. Positions 323–342 are enriched in acidic residues; it reads KEEEEEEEEEDVSHVDEEDV. Residues 360 to 377 show a composition bias toward basic and acidic residues; that stretch reads QVDKLRRPEGASNESERH.

Belongs to the peroxin-14 family. Interacts with PEX13; forming the PEX13-PEX14 docking complex. Interacts with PEX5 (via WxxxF/Y motifs). Interacts with PEX19. Interacts with tubulin.

Its subcellular location is the peroxisome membrane. In terms of biological role, component of the PEX13-PEX14 docking complex, a translocon channel that specifically mediates the import of peroxisomal cargo proteins bound to PEX5 receptor. The PEX13-PEX14 docking complex forms a large import pore which can be opened to a diameter of about 9 nm. Mechanistically, PEX5 receptor along with cargo proteins associates with the PEX14 subunit of the PEX13-PEX14 docking complex in the cytosol, leading to the insertion of the receptor into the organelle membrane with the concomitant translocation of the cargo into the peroxisome matrix. Plays a key role for peroxisome movement through a direct interaction with tubulin. The chain is Peroxisomal membrane protein PEX14 from Cricetulus longicaudatus (Long-tailed dwarf hamster).